The following is a 504-amino-acid chain: Plasma protease C1 inhibitor (504 aa).

The first 22 residues, 1-22, serve as a signal peptide directing secretion; the sequence is MASRLTPLTLLLLLLAGDRAFS. Residues 22-67 form a disordered region; sequence SDPEATSHSTQDPLEAQAKSRESFPERDDSWSPPEPTVLPSTWPTT. A compositionally biased stretch (basic and acidic residues) spans 39-51; sequence AKSRESFPERDDS. N-linked (GlcNAc...) asparagine glycosylation is found at asparagine 75, asparagine 83, and asparagine 107. Over residues 85–124 the composition is skewed to polar residues; it reads SFSQHSQPAAQLPTDSPGQPPLNSSSQPSTASDLPTQATT. The interval 85 to 141 is disordered; sequence SFSQHSQPAAQLPTDSPGQPPLNSSSQPSTASDLPTQATTEPFCPEPLAQCSDSDRD. Intrachain disulfides connect cysteine 128–cysteine 432 and cysteine 135–cysteine 210. N-linked (GlcNAc...) asparagine glycans are attached at residues asparagine 243 and asparagine 356.

This sequence belongs to the serpin family. As to quaternary structure, interacts with MASP1.

It is found in the secreted. Its function is as follows. Serine protease inhibitor, which acrs as a regulator of the classical complement pathway. Forms a proteolytically inactive stoichiometric complex with the C1r or C1s proteases. May also regulate blood coagulation, fibrinolysis and the generation of kinins. Very efficient inhibitor of FXIIa. Inhibits chymotrypsin and kallikrein. The protein is Plasma protease C1 inhibitor (Serping1) of Mus musculus (Mouse).